A 231-amino-acid chain; its full sequence is NKG2-C type II integral membrane protein (231 aa).

A compositionally biased stretch (polar residues) spans 1–12 (MNKQRGTFSEVS). Residues 1–32 (MNKQRGTFSEVSLAQDPKRQQRKPKGNKSSIS) are disordered. Residues 1-70 (MNKQRGTFSE…CQGLLPPPEK (70 aa)) are Cytoplasmic-facing. A helical; Signal-anchor for type II membrane protein membrane pass occupies residues 71–93 (LTAEVLGIICIVLMATVLKTIVL). Residues 94-231 (IPFLEQNNFS…SMIYHCKHKL (138 aa)) lie on the Extracellular side of the membrane. N100 carries N-linked (GlcNAc...) asparagine glycosylation. The C-type lectin domain occupies 116 to 229 (HCPEEWITYS…GSSMIYHCKH (114 aa)). 3 disulfide bridges follow: C117/C128, C145/C227, and C206/C219. Residues N149 and N178 are each glycosylated (N-linked (GlcNAc...) asparagine).

As to quaternary structure, heterodimer with KLRD1; disulfide-linked. KLRD1-KLRC2 receptor complex interacts with TYROBP homodimer; this interaction is necessary for the expression on the cell surface. KLRD1-KLRC2 receptor complex can bind with low affinity to HLA-E loaded with self-peptides derived from the signal sequence of classical MHC class Ia. Expressed in NK cell subsets, in particular in adaptive CD57-positive NK cells (at protein level). Expressed in terminally differentiated cytotoxic gamma-delta T cells (at protein level). Expressed in alpha-beta T cells subsets (at protein level). KLRD1-KLRC1 and KLRD1-KLRC2 are differentially expressed within NK and T cell populations, with only minor subsets expressing both receptor complexes (at protein level).

It is found in the cell membrane. Its function is as follows. Immune activating receptor involved in self-nonself discrimination. In complex with KLRD1 on cytotoxic lymphocyte subsets, recognizes non-classical major histocompatibility (MHC) class Ib HLA-E loaded with signal sequence-derived peptides from non-classical MHC class Ib HLA-G molecules, likely playing a role in the generation and effector functions of adaptive natural killer (NK) cells and in maternal-fetal tolerance during pregnancy. Regulates the effector functions of terminally differentiated cytotoxic lymphocyte subsets, and in particular may play a role in adaptive NK cell response to viral infection. Upon HLA-E-peptide binding, transmits intracellular signals via the adapter protein TYROBP/DAP12, triggering the phosphorylation of proximal signaling molecules and cell activation. The polypeptide is NKG2-C type II integral membrane protein (KLRC2) (Homo sapiens (Human)).